Consider the following 55-residue polypeptide: uncharacterized protein (55 aa).

The segment at 1–22 (MPALKSHVRPNSAAPARRQPWP) is disordered.

This is an uncharacterized protein from Rhodobacter capsulatus (Rhodopseudomonas capsulata).